Here is a 1050-residue protein sequence, read N- to C-terminus: Isoleucine--tRNA ligase (1050 aa).

A 'HIGH' region motif is present at residues 45-56 (PYPSSPIPHIGT). The 'KMSKS' region motif lies at 594–598 (EMHKS). Lys-597 serves as a coordination point for ATP.

This sequence belongs to the class-I aminoacyl-tRNA synthetase family. IleS type 2 subfamily. Monomer. It depends on Zn(2+) as a cofactor.

It localises to the cytoplasm. The enzyme catalyses tRNA(Ile) + L-isoleucine + ATP = L-isoleucyl-tRNA(Ile) + AMP + diphosphate. Functionally, catalyzes the attachment of isoleucine to tRNA(Ile). As IleRS can inadvertently accommodate and process structurally similar amino acids such as valine, to avoid such errors it has two additional distinct tRNA(Ile)-dependent editing activities. One activity is designated as 'pretransfer' editing and involves the hydrolysis of activated Val-AMP. The other activity is designated 'posttransfer' editing and involves deacylation of mischarged Val-tRNA(Ile). The polypeptide is Isoleucine--tRNA ligase (Sulfolobus acidocaldarius (strain ATCC 33909 / DSM 639 / JCM 8929 / NBRC 15157 / NCIMB 11770)).